We begin with the raw amino-acid sequence, 118 residues long: Small ribosomal subunit protein uS13 (118 aa).

Residues 94-118 form a disordered region; sequence GLPVRGQRTKTNARTRKGPCKPIKK.

The protein belongs to the universal ribosomal protein uS13 family. As to quaternary structure, part of the 30S ribosomal subunit. Forms a loose heterodimer with protein S19. Forms two bridges to the 50S subunit in the 70S ribosome.

In terms of biological role, located at the top of the head of the 30S subunit, it contacts several helices of the 16S rRNA. In the 70S ribosome it contacts the 23S rRNA (bridge B1a) and protein L5 of the 50S subunit (bridge B1b), connecting the 2 subunits; these bridges are implicated in subunit movement. Contacts the tRNAs in the A and P-sites. The sequence is that of Small ribosomal subunit protein uS13 from Salmonella typhi.